Reading from the N-terminus, the 199-residue chain is uncharacterized protein (199 aa).

Helical transmembrane passes span 27–47 (LIKI…PILA), 55–75 (LLTL…VAAL), and 172–192 (LLLL…VLLL).

It is found in the cell membrane. This is an uncharacterized protein from Synechocystis sp. (strain ATCC 27184 / PCC 6803 / Kazusa).